Here is a 431-residue protein sequence, read N- to C-terminus: Adenylosuccinate synthetase (431 aa).

GTP-binding positions include 12–18 and 40–42; these read GDEGKGK and GHT. Catalysis depends on Asp13, which acts as the Proton acceptor. The Mg(2+) site is built by Asp13 and Gly40. Residues 13-16, 38-41, Thr130, Arg144, Gln225, Thr240, and Arg304 contribute to the IMP site; these read DEGK and NAGH. His41 (proton donor) is an active-site residue. Residue 300–306 participates in substrate binding; it reads ATTGRPR. Residues Arg306, 332–334, and 414–416 contribute to the GTP site; these read KLD and SVG.

This sequence belongs to the adenylosuccinate synthetase family. As to quaternary structure, homodimer. The cofactor is Mg(2+).

It localises to the cytoplasm. The catalysed reaction is IMP + L-aspartate + GTP = N(6)-(1,2-dicarboxyethyl)-AMP + GDP + phosphate + 2 H(+). It participates in purine metabolism; AMP biosynthesis via de novo pathway; AMP from IMP: step 1/2. Its function is as follows. Plays an important role in the de novo pathway of purine nucleotide biosynthesis. Catalyzes the first committed step in the biosynthesis of AMP from IMP. The protein is Adenylosuccinate synthetase of Geotalea daltonii (strain DSM 22248 / JCM 15807 / FRC-32) (Geobacter daltonii).